Here is a 181-residue protein sequence, read N- to C-terminus: Ribose 1,5-bisphosphate phosphokinase PhnN (181 aa).

An ATP-binding site is contributed by 12–19; that stretch reads GPSGAGKD.

The protein belongs to the ribose 1,5-bisphosphokinase family.

It catalyses the reaction alpha-D-ribose 1,5-bisphosphate + ATP = 5-phospho-alpha-D-ribose 1-diphosphate + ADP. It functions in the pathway metabolic intermediate biosynthesis; 5-phospho-alpha-D-ribose 1-diphosphate biosynthesis; 5-phospho-alpha-D-ribose 1-diphosphate from D-ribose 5-phosphate (route II): step 3/3. Catalyzes the phosphorylation of ribose 1,5-bisphosphate to 5-phospho-D-ribosyl alpha-1-diphosphate (PRPP). The protein is Ribose 1,5-bisphosphate phosphokinase PhnN of Acidiphilium cryptum (strain JF-5).